Consider the following 367-residue polypeptide: Choline-phosphate cytidylyltransferase A (367 aa).

Methionine 1 carries the N-acetylmethionine modification. A disordered region spans residues methionine 1–lysine 33. Residue lysine 8 is modified to N6-acetyllysine. Positions 84, 85, 92, and 122 each coordinate CTP. Lysine 122 and tryptophan 151 together coordinate phosphocholine. Positions 168, 169, 173, 195, 196, 197, and 200 each coordinate CTP. 2 amphipathic regions span residues lysine 228 to glycine 287 and alanine 298 to serine 315. Serine 233 carries the phosphoserine modification. The segment at isoleucine 272–phenylalanine 293 is autoinhibitory (AI). The interval alanine 313–aspartate 367 is disordered. 5 positions are modified to phosphoserine: serine 315, serine 319, serine 321, serine 322, and serine 323. Residues serine 319 to proline 324 form repeat 1. Positions serine 319 to serine 339 are enriched in low complexity. Threonine 325 is subject to Phosphothreonine. Phosphoserine is present on residues serine 329, serine 331, and serine 333. The 2; approximate repeat unit spans residues serine 329–serine 333. A Phosphothreonine modification is found at threonine 342. 4 positions are modified to phosphoserine: serine 343, serine 347, serine 352, and serine 362. Residues serine 343–proline 348 form repeat 3.

This sequence belongs to the cytidylyltransferase family. In terms of assembly, homodimer. The serine residues of the C-terminus are phosphorylated. The inactive soluble form is stabilized by phosphorylation, the active membrane bound form is promoted by anionic lipids or diacylglycerol, and is stabilized by dephosphorylation. In terms of processing, monoubiquitinated by the SCF(FBXL2) complex, leading to proteasomal degradation. As to expression, brain, placenta, liver, fetal and adult lung.

It is found in the cytoplasm. It localises to the cytosol. The protein localises to the membrane. The protein resides in the endoplasmic reticulum membrane. Its subcellular location is the nucleus. The enzyme catalyses phosphocholine + CTP + H(+) = CDP-choline + diphosphate. It functions in the pathway phospholipid metabolism; phosphatidylcholine biosynthesis; phosphatidylcholine from phosphocholine: step 1/2. With respect to regulation, interconverts between an inactive cytosolic form and an active membrane-bound form. Activation involves disruption of an inhibitory interaction between helices at the base of the active site and the autoinhibitory (AI) region. Activated by anionic lipid vesicles and by oleic acid or diacylglycerol-containing phosphatidylcholine vesicles. Its function is as follows. Catalyzes the key rate-limiting step in the CDP-choline pathway for phosphatidylcholine biosynthesis. In Homo sapiens (Human), this protein is Choline-phosphate cytidylyltransferase A (PCYT1A).